A 1049-amino-acid polypeptide reads, in one-letter code: Presequence protease, mitochondrial (1049 aa).

The transit peptide at 1-39 directs the protein to the mitochondrion; sequence MLRSYLHLGRHRTPAFRQPLGRLLRPTASILQYAQSRTL. His-113 is a binding site for Zn(2+). Glu-116 functions as the Proton acceptor in the catalytic mechanism. His-117 serves as a coordination point for Zn(2+). The active site involves Glu-189. Glu-222 provides a ligand contact to Zn(2+).

Belongs to the peptidase M16 family. PreP subfamily. Monomer and homodimer; homodimerization is induced by binding of the substrate. The cofactor is Zn(2+).

It localises to the mitochondrion intermembrane space. Its subcellular location is the mitochondrion matrix. Degrades mitochondrial transit peptides after their cleavage in the intermembrane space or in the matrix, and presequence peptides; clearance of these peptides is required to keep the presequence processing machinery running. Preferentially cleaves the N-terminal side of paired basic amino acid residues. Also degrades other unstructured peptides. May function as an ATP-dependent peptidase as opposed to a metalloendopeptidase. This chain is Presequence protease, mitochondrial (cym1), found in Emericella nidulans (strain FGSC A4 / ATCC 38163 / CBS 112.46 / NRRL 194 / M139) (Aspergillus nidulans).